The sequence spans 244 residues: Phosphoadenosine 5'-phosphosulfate reductase (244 aa).

Cys239 functions as the Nucleophile; cysteine thiosulfonate intermediate in the catalytic mechanism.

Belongs to the PAPS reductase family. CysH subfamily.

Its subcellular location is the cytoplasm. The catalysed reaction is [thioredoxin]-disulfide + sulfite + adenosine 3',5'-bisphosphate + 2 H(+) = [thioredoxin]-dithiol + 3'-phosphoadenylyl sulfate. It functions in the pathway sulfur metabolism; hydrogen sulfide biosynthesis; sulfite from sulfate: step 3/3. Catalyzes the formation of sulfite from phosphoadenosine 5'-phosphosulfate (PAPS) using thioredoxin as an electron donor. This chain is Phosphoadenosine 5'-phosphosulfate reductase, found in Pectobacterium atrosepticum (strain SCRI 1043 / ATCC BAA-672) (Erwinia carotovora subsp. atroseptica).